Consider the following 546-residue polypeptide: CTP synthase (546 aa).

The amidoligase domain stretch occupies residues 1–269 (MNPNTKIIFV…DAKLVELLNL (269 aa)). Serine 16 contacts CTP. Position 16 (serine 16) interacts with UTP. ATP-binding positions include 17 to 22 (SLGKGV) and aspartate 74. Residues aspartate 74 and glutamate 143 each coordinate Mg(2+). CTP is bound by residues 150-152 (DIE), 190-195 (KTKPTQ), and lysine 226. UTP contacts are provided by residues 190 to 195 (KTKPTQ) and lysine 226. In terms of domain architecture, Glutamine amidotransferase type-1 spans 294-546 (TIAMVGKYVS…IHAAVEKSNK (253 aa)). Glycine 356 lines the L-glutamine pocket. Residue cysteine 383 is the Nucleophile; for glutamine hydrolysis of the active site. Residues 384-387 (LGMQ), glutamate 407, and arginine 474 each bind L-glutamine. Active-site residues include histidine 519 and glutamate 521.

It belongs to the CTP synthase family. In terms of assembly, homotetramer.

The enzyme catalyses UTP + L-glutamine + ATP + H2O = CTP + L-glutamate + ADP + phosphate + 2 H(+). It catalyses the reaction L-glutamine + H2O = L-glutamate + NH4(+). It carries out the reaction UTP + NH4(+) + ATP = CTP + ADP + phosphate + 2 H(+). It participates in pyrimidine metabolism; CTP biosynthesis via de novo pathway; CTP from UDP: step 2/2. Allosterically activated by GTP, when glutamine is the substrate; GTP has no effect on the reaction when ammonia is the substrate. The allosteric effector GTP functions by stabilizing the protein conformation that binds the tetrahedral intermediate(s) formed during glutamine hydrolysis. Inhibited by the product CTP, via allosteric rather than competitive inhibition. Its function is as follows. Catalyzes the ATP-dependent amination of UTP to CTP with either L-glutamine or ammonia as the source of nitrogen. Regulates intracellular CTP levels through interactions with the four ribonucleotide triphosphates. This Francisella philomiragia subsp. philomiragia (strain ATCC 25017 / CCUG 19701 / FSC 153 / O#319-036) protein is CTP synthase.